Consider the following 120-residue polypeptide: Large ribosomal subunit protein uL18 (120 aa).

The protein belongs to the universal ribosomal protein uL18 family. In terms of assembly, part of the 50S ribosomal subunit; part of the 5S rRNA/L5/L18/L25 subcomplex. Contacts the 5S and 23S rRNAs.

Functionally, this is one of the proteins that bind and probably mediate the attachment of the 5S RNA into the large ribosomal subunit, where it forms part of the central protuberance. This is Large ribosomal subunit protein uL18 from Rhizobium leguminosarum bv. trifolii (strain WSM2304).